Reading from the N-terminus, the 511-residue chain is UDP-N-acetylmuramoyl-L-alanyl-D-glutamate--2,6-diaminopimelate ligase (511 aa).

Ser-30 contacts UDP-N-acetyl-alpha-D-muramoyl-L-alanyl-D-glutamate. Residue 110 to 116 (GTNGKTT) coordinates ATP. Residues 152–153 (TT), Ser-179, Gln-185, and Arg-187 each bind UDP-N-acetyl-alpha-D-muramoyl-L-alanyl-D-glutamate. Lys-219 carries the N6-carboxylysine modification. Meso-2,6-diaminopimelate contacts are provided by residues Arg-385, 409–412 (DNPR), Gly-476, and Glu-480. The Meso-diaminopimelate recognition motif motif lies at 409 to 412 (DNPR).

Belongs to the MurCDEF family. MurE subfamily. The cofactor is Mg(2+). In terms of processing, carboxylation is probably crucial for Mg(2+) binding and, consequently, for the gamma-phosphate positioning of ATP.

The protein localises to the cytoplasm. The catalysed reaction is UDP-N-acetyl-alpha-D-muramoyl-L-alanyl-D-glutamate + meso-2,6-diaminopimelate + ATP = UDP-N-acetyl-alpha-D-muramoyl-L-alanyl-gamma-D-glutamyl-meso-2,6-diaminopimelate + ADP + phosphate + H(+). Its pathway is cell wall biogenesis; peptidoglycan biosynthesis. In terms of biological role, catalyzes the addition of meso-diaminopimelic acid to the nucleotide precursor UDP-N-acetylmuramoyl-L-alanyl-D-glutamate (UMAG) in the biosynthesis of bacterial cell-wall peptidoglycan. The polypeptide is UDP-N-acetylmuramoyl-L-alanyl-D-glutamate--2,6-diaminopimelate ligase (Geobacter metallireducens (strain ATCC 53774 / DSM 7210 / GS-15)).